Consider the following 311-residue polypeptide: tRNA (guanine-N(7)-)-methyltransferase (311 aa).

3 residues coordinate S-adenosyl-L-methionine: Glu-28, Glu-53, and Asp-103. Residue Asp-103 is part of the active site. Substrate contacts are provided by Lys-107 and Asp-139.

Belongs to the class I-like SAM-binding methyltransferase superfamily. TrmB family.

The catalysed reaction is guanosine(46) in tRNA + S-adenosyl-L-methionine = N(7)-methylguanosine(46) in tRNA + S-adenosyl-L-homocysteine. It functions in the pathway tRNA modification; N(7)-methylguanine-tRNA biosynthesis. Catalyzes the formation of N(7)-methylguanine at position 46 (m7G46) in tRNA. This chain is tRNA (guanine-N(7)-)-methyltransferase, found in Thermus thermophilus (strain ATCC BAA-163 / DSM 7039 / HB27).